The chain runs to 641 residues: Raffinose carrier protein (641 aa).

The permease stretch occupies residues 1–506 (MQEEHNYKWV…GQVIPLAQVN (506 aa)). 12 helical membrane-spanning segments follow: residues 25–45 (AFYS…LFDT), 57–77 (LVTL…PFIG), 93–113 (WVVV…TNLG), 120–140 (AMIY…FYSF), 168–188 (LGST…VIFF), 201–221 (WFIF…GVGL), 253–273 (LLWA…LGSL), 288–308 (FSIL…LFPV), 317–337 (GVFA…TIAG), 342–362 (LVLL…LVVL), 394–414 (FGGA…GMTT), and 429–449 (FKLT…GIFS). The PTS EIIA type-1 domain occupies 507–611 (DPTFAAGTLG…DDTVIMTVTN (105 aa)). Histidine 559 is subject to Phosphohistidine; by HPr.

This sequence in the N-terminal section; belongs to the sodium:galactoside symporter (TC 2.A.2) family.

It localises to the cell membrane. The polypeptide is Raffinose carrier protein (rafP) (Pediococcus pentosaceus).